The following is a 130-amino-acid chain: Small ribosomal subunit protein uS11 (130 aa).

It belongs to the universal ribosomal protein uS11 family. As to quaternary structure, part of the 30S ribosomal subunit. Interacts with proteins S7 and S18. Binds to IF-3.

Located on the platform of the 30S subunit, it bridges several disparate RNA helices of the 16S rRNA. Forms part of the Shine-Dalgarno cleft in the 70S ribosome. The sequence is that of Small ribosomal subunit protein uS11 from Phytoplasma mali (strain AT).